We begin with the raw amino-acid sequence, 1005 residues long: Translation initiation factor IF-2 (1005 aa).

2 disordered regions span residues 54-337 and 368-414; these read KYVP…RRPQ and PKPK…PTSV. Residues 58–73 show a composition bias toward polar residues; the sequence is SPSTHSMPPTRPTSHS. Positions 75-86 are enriched in pro residues; that stretch reads PLPPQPGKPQPK. Over residues 146-157 the composition is skewed to polar residues; that stretch reads GSNSPSHSESTP. 2 stretches are compositionally biased toward low complexity: residues 189–198 and 222–240; these read PSPAAMAGRA and VESAPVATATPAPASPRAE. Positions 258 to 274 are enriched in basic and acidic residues; the sequence is PRSETSEDGARRGEKLV. The span at 392-401 shows a compositional bias: basic residues; it reads GGRKLSRRDR. A tr-type G domain is found at 495–668; that stretch reads RRPPVVTIMG…LLVSEVEDLY (174 aa). The segment at 504 to 511 is G1; it reads GHVDHGKT. Position 504–511 (504–511) interacts with GTP; that stretch reads GHVDHGKT. The G2 stretch occupies residues 529-533; that stretch reads GITQH. The segment at 554–557 is G3; sequence DTPG. Residues 554–558 and 608–611 each bind GTP; these read DTPGH and NKID. Residues 608–611 are G4; sequence NKID. The G5 stretch occupies residues 644–646; the sequence is SAI.

It belongs to the TRAFAC class translation factor GTPase superfamily. Classic translation factor GTPase family. IF-2 subfamily.

It is found in the cytoplasm. Functionally, one of the essential components for the initiation of protein synthesis. Protects formylmethionyl-tRNA from spontaneous hydrolysis and promotes its binding to the 30S ribosomal subunits. Also involved in the hydrolysis of GTP during the formation of the 70S ribosomal complex. The protein is Translation initiation factor IF-2 of Cyanothece sp. (strain PCC 7425 / ATCC 29141).